The sequence spans 357 residues: Sulfate/thiosulfate import ATP-binding protein CysA (357 aa).

One can recognise an ABC transporter domain in the interval Ile-3 to Leu-237. An ATP-binding site is contributed by Gly-35–Thr-42.

It belongs to the ABC transporter superfamily. Sulfate/tungstate importer (TC 3.A.1.6) family. The complex is composed of two ATP-binding proteins (CysA), two transmembrane proteins (CysT and CysW) and a solute-binding protein (CysP).

It localises to the cell membrane. The enzyme catalyses sulfate(out) + ATP + H2O = sulfate(in) + ADP + phosphate + H(+). It catalyses the reaction thiosulfate(out) + ATP + H2O = thiosulfate(in) + ADP + phosphate + H(+). In terms of biological role, part of the ABC transporter complex CysAWTP involved in sulfate/thiosulfate import. Responsible for energy coupling to the transport system. The sequence is that of Sulfate/thiosulfate import ATP-binding protein CysA from Halalkalibacterium halodurans (strain ATCC BAA-125 / DSM 18197 / FERM 7344 / JCM 9153 / C-125) (Bacillus halodurans).